The primary structure comprises 270 residues: 2-oxoglutarate synthase subunit KorB (270 aa).

Heterotetramer of the KorA, KorB, KorC and KorD subunits.

It catalyses the reaction 2 oxidized [2Fe-2S]-[ferredoxin] + 2-oxoglutarate + CoA = succinyl-CoA + 2 reduced [2Fe-2S]-[ferredoxin] + CO2 + H(+). The sequence is that of 2-oxoglutarate synthase subunit KorB (korB) from Methanocaldococcus jannaschii (strain ATCC 43067 / DSM 2661 / JAL-1 / JCM 10045 / NBRC 100440) (Methanococcus jannaschii).